Consider the following 193-residue polypeptide: FMN-dependent NADH:quinone oxidoreductase 1 (193 aa).

FMN contacts are provided by residues S9, 15-17, and 85-88; these read SIS and MYNF.

Belongs to the azoreductase type 1 family. As to quaternary structure, homodimer. It depends on FMN as a cofactor.

The catalysed reaction is 2 a quinone + NADH + H(+) = 2 a 1,4-benzosemiquinone + NAD(+). It catalyses the reaction N,N-dimethyl-1,4-phenylenediamine + anthranilate + 2 NAD(+) = 2-(4-dimethylaminophenyl)diazenylbenzoate + 2 NADH + 2 H(+). Quinone reductase that provides resistance to thiol-specific stress caused by electrophilic quinones. Functionally, also exhibits azoreductase activity. Catalyzes the reductive cleavage of the azo bond in aromatic azo compounds to the corresponding amines. In Xanthomonas axonopodis pv. citri (strain 306), this protein is FMN-dependent NADH:quinone oxidoreductase 1.